The primary structure comprises 336 residues: UbiA prenyltransferase domain-containing protein 1 (336 aa).

Residues 1-22 are disordered; that stretch reads MQEMKPAALSGSNGLNGASGSS. The segment covering 7 to 22 has biased composition (low complexity); it reads AALSGSNGLNGASGSS. A run of 7 helical transmembrane segments spans residues 79-99, 129-149, 158-178, 180-200, 201-221, 254-274, and 315-335; these read LLLL…GNLV, VVMF…LLYF, LALI…GIGL, YVAL…VMFA, HAVQ…PLAL, LSYV…CILA, and LLMG…SLPL.

This sequence belongs to the UbiA prenyltransferase family.

The protein localises to the endoplasmic reticulum membrane. It is found in the golgi apparatus membrane. The protein resides in the mitochondrion membrane. The catalysed reaction is menadiol + (2E,6E,10E)-geranylgeranyl diphosphate = menaquinol-4 + diphosphate. It catalyses the reaction all-trans-decaprenyl diphosphate + 4-hydroxybenzoate = 4-hydroxy-3-(all-trans-decaprenyl)benzoate + diphosphate. The protein operates within quinol/quinone metabolism; menaquinone biosynthesis. It functions in the pathway cofactor biosynthesis; ubiquinone biosynthesis. Its function is as follows. Prenyltransferase that mediates the formation of menaquinone-4 (MK-4) and coenzyme Q10. MK-4 is a vitamin K2 isoform required for endothelial cell development. Mediates the conversion of phylloquinone (PK) into MK-4, probably by cleaving the side chain of phylloquinone (PK) to release 2-methyl-1,4-naphthoquinone (menadione; K3) and then prenylating it with geranylgeranyl pyrophosphate (GGPP) to form MK-4. Also plays a role in cardiovascular development independently of MK-4 biosynthesis, by acting as a coenzyme Q10 biosynthetic enzyme: coenzyme Q10, also named ubiquinone, plays an important antioxidant role in the cardiovascular system. Mediates biosynthesis of coenzyme Q10 in the Golgi membrane, leading to protect cardiovascular tissues from nos3/eNOS-dependent oxidative stress. The protein is UbiA prenyltransferase domain-containing protein 1 (ubiad1) of Danio rerio (Zebrafish).